Reading from the N-terminus, the 264-residue chain is NAD-capped RNA hydrolase NudC (264 aa).

A substrate-binding site is contributed by Arg70. Positions 99 and 102 each coordinate Zn(2+). Substrate is bound at residue Glu112. Positions 117 and 122 each coordinate Zn(2+). Residue Tyr127 coordinates substrate. One can recognise a Nudix hydrolase domain in the interval 128 to 257; it reads PVICPSIIVA…TIALKLINAT (130 aa). The a divalent metal cation site is built by Ala166, Glu182, and Glu186. The short motif at 167–188 is the Nudix box element; it reads GFVEIGESFEQTVEREVFEETG. 200-207 serves as a coordination point for substrate; it reads QPWAFPNS. Glu227 is an a divalent metal cation binding site. Substrate is bound at residue Ala250.

The protein belongs to the Nudix hydrolase family. NudC subfamily. Homodimer. Requires Mg(2+) as cofactor. Mn(2+) serves as cofactor. Zn(2+) is required as a cofactor.

It carries out the reaction a 5'-end NAD(+)-phospho-ribonucleoside in mRNA + H2O = a 5'-end phospho-adenosine-phospho-ribonucleoside in mRNA + beta-nicotinamide D-ribonucleotide + 2 H(+). The enzyme catalyses NAD(+) + H2O = beta-nicotinamide D-ribonucleotide + AMP + 2 H(+). It catalyses the reaction NADH + H2O = reduced beta-nicotinamide D-ribonucleotide + AMP + 2 H(+). In terms of biological role, mRNA decapping enzyme that specifically removes the nicotinamide adenine dinucleotide (NAD) cap from a subset of mRNAs by hydrolyzing the diphosphate linkage to produce nicotinamide mononucleotide (NMN) and 5' monophosphate mRNA. The NAD-cap is present at the 5'-end of some mRNAs and stabilizes RNA against 5'-processing. Has preference for mRNAs with a 5'-end purine. Catalyzes the hydrolysis of a broad range of dinucleotide pyrophosphates. The sequence is that of NAD-capped RNA hydrolase NudC from Actinobacillus succinogenes (strain ATCC 55618 / DSM 22257 / CCUG 43843 / 130Z).